We begin with the raw amino-acid sequence, 258 residues long: Acyl-[acyl-carrier-protein]--UDP-N-acetylglucosamine O-acyltransferase (258 aa).

Belongs to the transferase hexapeptide repeat family. LpxA subfamily. In terms of assembly, homotrimer.

It is found in the cytoplasm. The enzyme catalyses a (3R)-hydroxyacyl-[ACP] + UDP-N-acetyl-alpha-D-glucosamine = a UDP-3-O-[(3R)-3-hydroxyacyl]-N-acetyl-alpha-D-glucosamine + holo-[ACP]. The protein operates within glycolipid biosynthesis; lipid IV(A) biosynthesis; lipid IV(A) from (3R)-3-hydroxytetradecanoyl-[acyl-carrier-protein] and UDP-N-acetyl-alpha-D-glucosamine: step 1/6. Its function is as follows. Involved in the biosynthesis of lipid A, a phosphorylated glycolipid that anchors the lipopolysaccharide to the outer membrane of the cell. This Myxococcus xanthus (strain DK1622) protein is Acyl-[acyl-carrier-protein]--UDP-N-acetylglucosamine O-acyltransferase.